Consider the following 85-residue polypeptide: Putative membrane protein insertion efficiency factor (85 aa).

This sequence belongs to the UPF0161 family.

It localises to the cell inner membrane. In terms of biological role, could be involved in insertion of integral membrane proteins into the membrane. The sequence is that of Putative membrane protein insertion efficiency factor from Escherichia coli O6:H1 (strain CFT073 / ATCC 700928 / UPEC).